A 550-amino-acid polypeptide reads, in one-letter code: Hydroxylamine reductase (550 aa).

[2Fe-2S] cluster contacts are provided by cysteine 3, cysteine 6, cysteine 18, and cysteine 25. The hybrid [4Fe-2O-2S] cluster site is built by histidine 249, glutamate 273, cysteine 317, cysteine 405, cysteine 433, cysteine 458, glutamate 492, and lysine 494. A Cysteine persulfide modification is found at cysteine 405.

It belongs to the HCP family. [2Fe-2S] cluster is required as a cofactor. Requires hybrid [4Fe-2O-2S] cluster as cofactor.

Its subcellular location is the cytoplasm. It carries out the reaction A + NH4(+) + H2O = hydroxylamine + AH2 + H(+). Functionally, catalyzes the reduction of hydroxylamine to form NH(3) and H(2)O. The sequence is that of Hydroxylamine reductase from Salmonella typhimurium (strain LT2 / SGSC1412 / ATCC 700720).